The sequence spans 252 residues: Triosephosphate isomerase (252 aa).

10–12 (NWK) is a binding site for substrate. The active-site Electrophile is histidine 96. Catalysis depends on glutamate 168, which acts as the Proton acceptor. Substrate contacts are provided by residues glycine 174, serine 214, and 235-236 (GG).

This sequence belongs to the triosephosphate isomerase family. Homodimer.

The protein resides in the cytoplasm. It carries out the reaction D-glyceraldehyde 3-phosphate = dihydroxyacetone phosphate. It functions in the pathway carbohydrate biosynthesis; gluconeogenesis. Its pathway is carbohydrate degradation; glycolysis; D-glyceraldehyde 3-phosphate from glycerone phosphate: step 1/1. Its function is as follows. Involved in the gluconeogenesis. Catalyzes stereospecifically the conversion of dihydroxyacetone phosphate (DHAP) to D-glyceraldehyde-3-phosphate (G3P). The polypeptide is Triosephosphate isomerase (Streptococcus pyogenes serotype M2 (strain MGAS10270)).